We begin with the raw amino-acid sequence, 293 residues long: Ethanolamine ammonia-lyase small subunit (293 aa).

Positions 207 and 228 each coordinate adenosylcob(III)alamin.

The protein belongs to the EutC family. The basic unit is a heterodimer which dimerizes to form tetramers. The heterotetramers trimerize; 6 large subunits form a core ring with 6 small subunits projecting outwards. The cofactor is adenosylcob(III)alamin.

The protein localises to the bacterial microcompartment. The catalysed reaction is ethanolamine = acetaldehyde + NH4(+). Its pathway is amine and polyamine degradation; ethanolamine degradation. Functionally, catalyzes the deamination of various vicinal amino-alcohols to oxo compounds. Allows this organism to utilize ethanolamine as the sole source of nitrogen and carbon in the presence of external vitamin B12. The polypeptide is Ethanolamine ammonia-lyase small subunit (Clostridioides difficile (strain 630) (Peptoclostridium difficile)).